The primary structure comprises 338 residues: UPF0324 membrane protein TauZ (338 aa).

10 helical membrane-spanning segments follow: residues 12 to 31 (IEAAFPGFAVSALVAATAQF), 36 to 55 (YGAPAMLLALLLGLALNFLA), 75 to 92 (LGVALLGARISAGMLAAL), 96 to 118 (AIALVAAGVVLTILFALAASRLV), 125 to 147 (ALLTGGSVAICGASAAMAIAAVL), 162 to 184 (LSVTVLSTVAMVLYPMLAGFFGF), 191 to 213 (VFLGGTIHDVAQVVGAGFSIGPE), 223 to 245 (LIRVSMLAPVVLCFSLAIRARGL), 258 to 280 (PGFVIGFLVLAALNSLGLVPAAV), and 315 to 337 (AIALILAETVFLAVFVTIGLHVL).

The protein belongs to the UPF0324 family.

It localises to the cell membrane. This is UPF0324 membrane protein TauZ (tauZ) from Paracoccus denitrificans.